The following is a 547-amino-acid chain: KsdD-like steroid dehydrogenase MSMEG_5835 (547 aa).

Residue 5–36 coordinates FAD; the sequence is DVIVVGAGLAGLVAACELVERGHSVIIVDQEN.

Belongs to the FAD-dependent oxidoreductase 2 family. It depends on FAD as a cofactor.

It participates in lipid metabolism; steroid biosynthesis. Functionally, able to catalyze the elimination of the C-1 and C-2 hydrogen atoms of the A-ring from the polycyclic ring structure of 3-ketosteroids, but the ketosteroid dehydrogenase activity is low compared to KsdD in the cholesterol degradation process. The low activity could be due to different substrate specificity. This Mycolicibacterium smegmatis (strain ATCC 700084 / mc(2)155) (Mycobacterium smegmatis) protein is KsdD-like steroid dehydrogenase MSMEG_5835.